A 127-amino-acid polypeptide reads, in one-letter code: Holo-[acyl-carrier-protein] synthase (127 aa).

Mg(2+) contacts are provided by aspartate 9 and glutamate 58.

It belongs to the P-Pant transferase superfamily. AcpS family. Mg(2+) serves as cofactor.

It localises to the cytoplasm. It carries out the reaction apo-[ACP] + CoA = holo-[ACP] + adenosine 3',5'-bisphosphate + H(+). Its function is as follows. Transfers the 4'-phosphopantetheine moiety from coenzyme A to a Ser of acyl-carrier-protein. This is Holo-[acyl-carrier-protein] synthase from Shewanella oneidensis (strain ATCC 700550 / JCM 31522 / CIP 106686 / LMG 19005 / NCIMB 14063 / MR-1).